The chain runs to 364 residues: S-adenosylmethionine:tRNA ribosyltransferase-isomerase (364 aa).

The protein belongs to the QueA family. Monomer.

Its subcellular location is the cytoplasm. The enzyme catalyses 7-aminomethyl-7-carbaguanosine(34) in tRNA + S-adenosyl-L-methionine = epoxyqueuosine(34) in tRNA + adenine + L-methionine + 2 H(+). It functions in the pathway tRNA modification; tRNA-queuosine biosynthesis. Transfers and isomerizes the ribose moiety from AdoMet to the 7-aminomethyl group of 7-deazaguanine (preQ1-tRNA) to give epoxyqueuosine (oQ-tRNA). The polypeptide is S-adenosylmethionine:tRNA ribosyltransferase-isomerase (Synechococcus sp. (strain CC9902)).